The primary structure comprises 215 residues: Probable transaldolase (215 aa).

Lys83 acts as the Schiff-base intermediate with substrate in catalysis.

The protein belongs to the transaldolase family. Type 3B subfamily.

The protein resides in the cytoplasm. It catalyses the reaction D-sedoheptulose 7-phosphate + D-glyceraldehyde 3-phosphate = D-erythrose 4-phosphate + beta-D-fructose 6-phosphate. Its pathway is carbohydrate degradation; pentose phosphate pathway; D-glyceraldehyde 3-phosphate and beta-D-fructose 6-phosphate from D-ribose 5-phosphate and D-xylulose 5-phosphate (non-oxidative stage): step 2/3. Functionally, transaldolase is important for the balance of metabolites in the pentose-phosphate pathway. This Methanococcus vannielii (strain ATCC 35089 / DSM 1224 / JCM 13029 / OCM 148 / SB) protein is Probable transaldolase.